The sequence spans 160 residues: SsrA-binding protein (160 aa).

The protein belongs to the SmpB family.

The protein localises to the cytoplasm. Required for rescue of stalled ribosomes mediated by trans-translation. Binds to transfer-messenger RNA (tmRNA), required for stable association of tmRNA with ribosomes. tmRNA and SmpB together mimic tRNA shape, replacing the anticodon stem-loop with SmpB. tmRNA is encoded by the ssrA gene; the 2 termini fold to resemble tRNA(Ala) and it encodes a 'tag peptide', a short internal open reading frame. During trans-translation Ala-aminoacylated tmRNA acts like a tRNA, entering the A-site of stalled ribosomes, displacing the stalled mRNA. The ribosome then switches to translate the ORF on the tmRNA; the nascent peptide is terminated with the 'tag peptide' encoded by the tmRNA and targeted for degradation. The ribosome is freed to recommence translation, which seems to be the essential function of trans-translation. This Dinoroseobacter shibae (strain DSM 16493 / NCIMB 14021 / DFL 12) protein is SsrA-binding protein.